We begin with the raw amino-acid sequence, 316 residues long: 4-hydroxy-3-methylbut-2-enyl diphosphate reductase (316 aa).

C18 is a binding site for [4Fe-4S] cluster. Positions 47 and 80 each coordinate (2E)-4-hydroxy-3-methylbut-2-enyl diphosphate. Positions 47 and 80 each coordinate dimethylallyl diphosphate. Residues H47 and H80 each contribute to the isopentenyl diphosphate site. Position 102 (C102) interacts with [4Fe-4S] cluster. H130 contributes to the (2E)-4-hydroxy-3-methylbut-2-enyl diphosphate binding site. Position 130 (H130) interacts with dimethylallyl diphosphate. H130 provides a ligand contact to isopentenyl diphosphate. Catalysis depends on E132, which acts as the Proton donor. Residue T171 participates in (2E)-4-hydroxy-3-methylbut-2-enyl diphosphate binding. A [4Fe-4S] cluster-binding site is contributed by C201. (2E)-4-hydroxy-3-methylbut-2-enyl diphosphate is bound by residues S229, S230, N231, and S274. Residues S229, S230, N231, and S274 each coordinate dimethylallyl diphosphate. Residues S229, S230, N231, and S274 each coordinate isopentenyl diphosphate.

It belongs to the IspH family. [4Fe-4S] cluster serves as cofactor.

It catalyses the reaction isopentenyl diphosphate + 2 oxidized [2Fe-2S]-[ferredoxin] + H2O = (2E)-4-hydroxy-3-methylbut-2-enyl diphosphate + 2 reduced [2Fe-2S]-[ferredoxin] + 2 H(+). The catalysed reaction is dimethylallyl diphosphate + 2 oxidized [2Fe-2S]-[ferredoxin] + H2O = (2E)-4-hydroxy-3-methylbut-2-enyl diphosphate + 2 reduced [2Fe-2S]-[ferredoxin] + 2 H(+). It participates in isoprenoid biosynthesis; dimethylallyl diphosphate biosynthesis; dimethylallyl diphosphate from (2E)-4-hydroxy-3-methylbutenyl diphosphate: step 1/1. Its pathway is isoprenoid biosynthesis; isopentenyl diphosphate biosynthesis via DXP pathway; isopentenyl diphosphate from 1-deoxy-D-xylulose 5-phosphate: step 6/6. Catalyzes the conversion of 1-hydroxy-2-methyl-2-(E)-butenyl 4-diphosphate (HMBPP) into a mixture of isopentenyl diphosphate (IPP) and dimethylallyl diphosphate (DMAPP). Acts in the terminal step of the DOXP/MEP pathway for isoprenoid precursor biosynthesis. This Paracoccus denitrificans (strain Pd 1222) protein is 4-hydroxy-3-methylbut-2-enyl diphosphate reductase.